We begin with the raw amino-acid sequence, 69 residues long: Proteinase inhibitor (69 aa).

At Ser-1 the chain carries N-acetylserine. Cys-4 and Cys-49 form a disulfide bridge.

Functionally, in vitro, strong inhibitor of bovine beta-trypsin, weak inhibitor of alpha-chymotrypsin, subtilisin BPN', subtilisin Carlsberg and cathepsin G. The chain is Proteinase inhibitor from Linum usitatissimum (Flax).